Here is a 375-residue protein sequence, read N- to C-terminus: 23S rRNA (uracil(747)-C(5))-methyltransferase RlmC (375 aa).

[4Fe-4S] cluster contacts are provided by C3, C11, C14, and C87. 4 residues coordinate S-adenosyl-L-methionine: Q212, F241, E262, and N307. C334 (nucleophile) is an active-site residue.

The protein belongs to the class I-like SAM-binding methyltransferase superfamily. RNA M5U methyltransferase family. RlmC subfamily.

It carries out the reaction uridine(747) in 23S rRNA + S-adenosyl-L-methionine = 5-methyluridine(747) in 23S rRNA + S-adenosyl-L-homocysteine + H(+). Catalyzes the formation of 5-methyl-uridine at position 747 (m5U747) in 23S rRNA. In Salmonella paratyphi A (strain ATCC 9150 / SARB42), this protein is 23S rRNA (uracil(747)-C(5))-methyltransferase RlmC.